We begin with the raw amino-acid sequence, 431 residues long: Adenylosuccinate synthetase (431 aa).

GTP-binding positions include 12–18 (GDEGKGK) and 40–42 (GHT). Aspartate 13 (proton acceptor) is an active-site residue. Positions 13 and 40 each coordinate Mg(2+). Residues 13–16 (DEGK), 38–41 (NAGH), threonine 131, arginine 145, glutamine 225, threonine 240, and arginine 304 contribute to the IMP site. The Proton donor role is filled by histidine 41. 300–306 (VNTGRPR) contributes to the substrate binding site. GTP contacts are provided by residues arginine 306, 332-334 (KLD), and 414-416 (STS).

It belongs to the adenylosuccinate synthetase family. As to quaternary structure, homodimer. Requires Mg(2+) as cofactor.

The protein localises to the cytoplasm. The enzyme catalyses IMP + L-aspartate + GTP = N(6)-(1,2-dicarboxyethyl)-AMP + GDP + phosphate + 2 H(+). The protein operates within purine metabolism; AMP biosynthesis via de novo pathway; AMP from IMP: step 1/2. Its function is as follows. Plays an important role in the de novo pathway of purine nucleotide biosynthesis. Catalyzes the first committed step in the biosynthesis of AMP from IMP. This chain is Adenylosuccinate synthetase, found in Rhizobium rhizogenes (strain K84 / ATCC BAA-868) (Agrobacterium radiobacter).